The chain runs to 114 residues: T cell receptor beta variable 4-2 (114 aa).

Positions 1-21 (MGCRLLCCAVLCLLGAVPMET) are cleaved as a signal peptide. In terms of domain architecture, Ig-like spans 22-114 (GVTQTPRHLV…SALYLCASSQ (93 aa)). Cys-42 and Cys-110 are disulfide-bonded. Residues Asn-76 and Asn-89 are each glycosylated (N-linked (GlcNAc...) asparagine).

In terms of assembly, alpha-beta TR is a heterodimer composed of an alpha and beta chain; disulfide-linked. The alpha-beta TR is associated with the transmembrane signaling CD3 coreceptor proteins to form the TR-CD3 (TcR or TCR). The assembly of alpha-beta TR heterodimers with CD3 occurs in the endoplasmic reticulum where a single alpha-beta TR heterodimer associates with one CD3D-CD3E heterodimer, one CD3G-CD3E heterodimer and one CD247 homodimer forming a stable octameric structure. CD3D-CD3E and CD3G-CD3E heterodimers preferentially associate with TR alpha and TR beta chains, respectively. The association of the CD247 homodimer is the last step of TcR assembly in the endoplasmic reticulum and is required for transport to the cell surface.

The protein resides in the cell membrane. In terms of biological role, v region of the variable domain of T cell receptor (TR) beta chain that participates in the antigen recognition. Alpha-beta T cell receptors are antigen specific receptors which are essential to the immune response and are present on the cell surface of T lymphocytes. Recognize peptide-major histocompatibility (MH) (pMH) complexes that are displayed by antigen presenting cells (APC), a prerequisite for efficient T cell adaptive immunity against pathogens. Binding of alpha-beta TR to pMH complex initiates TR-CD3 clustering on the cell surface and intracellular activation of LCK that phosphorylates the ITAM motifs of CD3G, CD3D, CD3E and CD247 enabling the recruitment of ZAP70. In turn ZAP70 phosphorylates LAT, which recruits numerous signaling molecules to form the LAT signalosome. The LAT signalosome propagates signal branching to three major signaling pathways, the calcium, the mitogen-activated protein kinase (MAPK) kinase and the nuclear factor NF-kappa-B (NF-kB) pathways, leading to the mobilization of transcription factors that are critical for gene expression and essential for T cell growth and differentiation. The T cell repertoire is generated in the thymus, by V-(D)-J rearrangement. This repertoire is then shaped by intrathymic selection events to generate a peripheral T cell pool of self-MH restricted, non-autoaggressive T cells. Post-thymic interaction of alpha-beta TR with the pMH complexes shapes TR structural and functional avidity. This chain is T cell receptor beta variable 4-2, found in Homo sapiens (Human).